A 469-amino-acid chain; its full sequence is Cysteine--tRNA ligase (469 aa).

Cys33 contacts Zn(2+). The short motif at Ala35–His45 is the 'HIGH' region element. 3 residues coordinate Zn(2+): Cys211, His236, and Glu240. The 'KMSKS' region motif lies at Lys267 to Ser271. Position 270 (Lys270) interacts with ATP.

This sequence belongs to the class-I aminoacyl-tRNA synthetase family. Monomer. Requires Zn(2+) as cofactor.

It localises to the cytoplasm. The enzyme catalyses tRNA(Cys) + L-cysteine + ATP = L-cysteinyl-tRNA(Cys) + AMP + diphosphate. The polypeptide is Cysteine--tRNA ligase (cysS) (Mycobacterium tuberculosis (strain CDC 1551 / Oshkosh)).